The chain runs to 561 residues: 3beta-hydroxysteroid-dehydrogenase/decarboxylase isoform 3 (561 aa).

An NAD(+)-binding site is contributed by Lys166. Residues 379 to 561 enclose the Reticulon domain; sequence VADILLWRNE…SDASSKPMFM (183 aa). A run of 3 helical transmembrane segments spans residues 392–412, 420–440, and 504–524; these read FVSF…GNTF, LFIF…IFGF, and SLAA…FIYE.

It belongs to the 3-beta-HSD family.

It is found in the endoplasmic reticulum membrane. The enzyme catalyses a 3beta-hydroxysteroid-4alpha-carboxylate + NADP(+) = a 3-oxosteroid + CO2 + NADPH. It catalyses the reaction a 3beta-hydroxysteroid-4alpha-carboxylate + NAD(+) = a 3-oxosteroid + CO2 + NADH. It participates in steroid biosynthesis; zymosterol biosynthesis; zymosterol from lanosterol: step 4/6. This is 3beta-hydroxysteroid-dehydrogenase/decarboxylase isoform 3 (3BETAHSD/D3) from Arabidopsis thaliana (Mouse-ear cress).